Consider the following 169-residue polypeptide: Cuticle protein 21 (169 aa).

6 tandem repeats follow at residues 21-24, 27-30, 33-36, 39-42, 47-50, and 53-56. A Chitin-binding type R&amp;R domain is found at 65–135; the sequence is NPQYSYAYNV…KEAGAHPAPV (71 aa). Tandem repeats lie at residues 140-143, 146-149, and 160-163.

In terms of biological role, component of the cuticle of migratory locust which contains more than 100 different structural proteins. This Locusta migratoria (Migratory locust) protein is Cuticle protein 21 (ACP21).